A 195-amino-acid chain; its full sequence is Large ribosomal subunit protein uL18 (195 aa).

It belongs to the universal ribosomal protein uL18 family. Part of the 50S ribosomal subunit. Contacts the 5S and 23S rRNAs.

In terms of biological role, this is one of the proteins that bind and probably mediate the attachment of the 5S RNA into the large ribosomal subunit, where it forms part of the central protuberance. In Methanocaldococcus jannaschii (strain ATCC 43067 / DSM 2661 / JAL-1 / JCM 10045 / NBRC 100440) (Methanococcus jannaschii), this protein is Large ribosomal subunit protein uL18.